Here is a 113-residue protein sequence, read N- to C-terminus: Mitochondrial import inner membrane translocase subunit tim16 (113 aa).

The J-like stretch occupies residues 56–108 (KILGLENVETVSKEDIDKKYNELLTINDPKDGGSEYLQIKISGAKHCLHSALK).

The protein belongs to the TIM16/PAM16 family. As to quaternary structure, probable component of the PAM complex at least composed of a mitochondrial HSP70 protein, grepE, tim16 and tim14. Associates with the TIM23 complex.

It is found in the mitochondrion inner membrane. Its function is as follows. Regulates ATP-dependent protein translocation into the mitochondrial matrix. In Dictyostelium discoideum (Social amoeba), this protein is Mitochondrial import inner membrane translocase subunit tim16 (timm16).